The following is a 285-amino-acid chain: Homeobox protein vex1 (285 aa).

Disordered stretches follow at residues 30–54 and 69–88; these read KSGN…LPSV and NEER…APQE. A compositionally biased stretch (basic and acidic residues) spans 69-80; sequence NEERSPPVKDQL. A DNA-binding region (homeobox) is located at residues 131–190; that stretch reads AARARTKFSPEQLEELERSFKENRYIGSSEKRRLSKVLKLSETQIKTWFQNRRMKFKRQT.

As to expression, widely expressed in the embryo prior to gastrulation. Becomes restricted to the ventral marginal zone by mid/late gastrulation. Ventral localization persists during gastrulation and neurulation in the ventral region of the closed blastopore and in the proctodeum during tail bud stages.

It is found in the nucleus. Its function is as follows. Transcriptional repressor. Acts in a ventral signaling pathway downstream of bmp4 to antagonize the Spemann organizer and ventrally pattern the embryonic mesoderm. Represses transcription of the dorsal genes gsc and otx2. The protein is Homeobox protein vex1 of Xenopus laevis (African clawed frog).